Consider the following 256-residue polypeptide: Large ribosomal subunit protein eL8y (256 aa).

Positions 1-15 are enriched in basic residues; that stretch reads MAPKKGVKVASKKKP. Residues 1–20 form a disordered region; the sequence is MAPKKGVKVASKKKPEKVTN.

It belongs to the eukaryotic ribosomal protein eL8 family.

This is Large ribosomal subunit protein eL8y (RPL7AB) from Arabidopsis thaliana (Mouse-ear cress).